Consider the following 705-residue polypeptide: Protein artemis (705 aa).

Threonine 380 is modified (phosphothreonine). Residue serine 385 is modified to Phosphoserine. Over residues glutamate 451–glutamate 462 the composition is skewed to acidic residues. Disordered regions lie at residues glutamate 451 to proline 484, proline 535 to serine 569, and threonine 638 to proline 675. Residues threonine 546–isoleucine 559 show a composition bias toward low complexity. Residues threonine 560–serine 569 show a composition bias toward polar residues. Over residues serine 652–serine 662 the composition is skewed to low complexity. Serine 658 is modified (phosphoserine; by ATM).

This sequence belongs to the DNA repair metallo-beta-lactamase (DRMBL) family. In terms of assembly, interacts with LIG4; the interaction is direct. Interacts with ATM. Interacts with BRCA1. Interacts with PRKDC. Interacts with TP53BP1. Also exhibits ATM- and phosphorylation-dependent interaction with the MRN complex, composed of MRE11, RAD50, and NBN. Phosphorylation on undefined residues by PRKDC may stimulate endonucleolytic activity on 5' and 3' hairpins and overhangs. PRKDC must remain present, even after phosphorylation, for efficient hairpin opening. Also phosphorylated by ATM in response to ionizing radiation (IR) and by ATR in response to ultraviolet (UV) radiation.

Its subcellular location is the nucleus. Required for V(D)J recombination, the process by which exons encoding the antigen-binding domains of immunoglobulins and T-cell receptor proteins are assembled from individual V, (D), and J gene segments. V(D)J recombination is initiated by the lymphoid specific RAG endonuclease complex, which generates site specific DNA double strand breaks (DSBs). These DSBs present two types of DNA end structures: hairpin sealed coding ends and phosphorylated blunt signal ends. These ends are independently repaired by the non homologous end joining (NHEJ) pathway to form coding and signal joints respectively. This protein likely exhibits single-strand specific 5'-3' exonuclease activity in isolation, and may acquire endonucleolytic activity on 5' and 3' hairpins and overhangs when in a complex with PRKDC. The latter activity may be required specifically for the resolution of closed hairpins prior to the formation of the coding joint. May also be required for the repair of complex DSBs induced by ionizing radiation, which require substantial end-processing prior to religation by NHEJ. In Mus musculus (Mouse), this protein is Protein artemis (Dclre1c).